A 292-amino-acid chain; its full sequence is Homoserine kinase (292 aa).

Residue 84 to 94 coordinates ATP; the sequence is PISRGLGSSSA.

It belongs to the GHMP kinase family. Homoserine kinase subfamily.

It localises to the cytoplasm. The catalysed reaction is L-homoserine + ATP = O-phospho-L-homoserine + ADP + H(+). It participates in amino-acid biosynthesis; L-threonine biosynthesis; L-threonine from L-aspartate: step 4/5. Functionally, catalyzes the ATP-dependent phosphorylation of L-homoserine to L-homoserine phosphate. In Sulfurovum sp. (strain NBC37-1), this protein is Homoserine kinase.